A 213-amino-acid chain; its full sequence is MSVSLSKGQGVSLKKNEYDLSSVTIGLGWDINEEKKGFLGGIFGKKEEEYDLDVIAFLCNSAGKVTDLGNVENGKPTLVNGDIIFFNSLRHKSGNIWLTGDNRTGAGDGDDEQIIVRLNSLDAQYEKIVFIVQIYNGEKLQQHFGKVQNAFIRAVDARNIEMARFDLSGGPAFASQRSMVFAELIREATGWKLRAIGEPSESDSFVSHLRNYM.

Belongs to the CAPAB/TerDEXZ family.

Functionally, not known; seems to contribute to the tellurium resistance (Ter) mechanism. Also involved in phage inhibition (Phi) and colicin resistance (PacB). The sequence is that of Tellurium resistance protein TerX (terX) from Serratia marcescens.